Consider the following 614-residue polypeptide: GPI transamidase component GAA1 (614 aa).

Residues 1 to 19 lie on the Cytoplasmic side of the membrane; the sequence is MALLEKLHRRIVDMGLVPR. A helical membrane pass occupies residues 20 to 40; that stretch reads IIALLPVISMLCALFGFISIA. The Lumenal segment spans residues 41–356; that stretch reads ILPMDGQYRR…APRQFVSISS (316 aa). Asn-87 is a glycosylation site (N-linked (GlcNAc...) asparagine). The chain crosses the membrane as a helical span at residues 357 to 377; that stretch reads YLPSAVALSIAFAISSLNAFI. Residues 378–394 lie on the Cytoplasmic side of the membrane; sequence NNAYANISLFSEYNLVA. A helical membrane pass occupies residues 395 to 415; sequence LLVWFVSLVISFVVSQAFLLI. Residues 416-464 lie on the Lumenal side of the membrane; the sequence is PSSGLLMTISMASCFLPLILSRKIHISEPLSYRLKNVAFLYFSLVSTSL. Residues 465–485 form a helical membrane-spanning segment; the sequence is LMINFAMALLIGTLAFPMTFV. The Cytoplasmic portion of the chain corresponds to 486 to 535; that stretch reads KTIVESSSEHEVTTQSSNPIKTEPKDEIELVENHMDTTPATPQQQKQKLK. The helical transmembrane segment at 536–556 threads the bilayer; sequence NLVLLILTNPFISITLFGLFF. Residues 557-577 are Lumenal-facing; it reads DDEFHGFDIINKLVSAWLDLK. The chain crosses the membrane as a helical span at residues 578 to 598; the sequence is CWSWFVLCIGWLPCWLLILAS. At 599–614 the chain is on the cytoplasmic side; the sequence is SFESKSVVVRSKEKQS. The short motif at 610–614 is the Prevents secretion from ER element; the sequence is KEKQS.

As to quaternary structure, forms a complex with CDC91, GPI17, GPI16 and GPI8.

The protein resides in the endoplasmic reticulum membrane. Its pathway is glycolipid biosynthesis; glycosylphosphatidylinositol-anchor biosynthesis. In terms of biological role, component of the GPI transamidase complex. Required for a terminal step of GPI anchor attachment onto proteins. Affects endocytosis. This chain is GPI transamidase component GAA1 (GAA1), found in Saccharomyces cerevisiae (strain ATCC 204508 / S288c) (Baker's yeast).